The sequence spans 225 residues: Pyrimidine 5'-nucleotidase YjjG (225 aa).

Catalysis depends on Asp9, which acts as the Nucleophile.

The protein belongs to the HAD-like hydrolase superfamily. YjjG family. In terms of assembly, monomer, homodimer and possibly homotetramer in solution. Mn(2+) serves as cofactor. The cofactor is Mg(2+). Requires Co(2+) as cofactor.

The protein resides in the cytoplasm. It carries out the reaction a ribonucleoside 5'-phosphate + H2O = a ribonucleoside + phosphate. It catalyses the reaction a 2'-deoxyribonucleoside 5'-phosphate + H2O = a 2'-deoxyribonucleoside + phosphate. The catalysed reaction is UMP + H2O = uridine + phosphate. The enzyme catalyses dUMP + H2O = 2'-deoxyuridine + phosphate. It carries out the reaction dTMP + H2O = thymidine + phosphate. In contrast to nucleotidases from other families, is not inhibited by ribo- and deoxyribonucleoside di- and triphosphates. Nucleotidase that shows high phosphatase activity toward non-canonical pyrimidine nucleotides and three canonical nucleoside 5'-monophosphates (UMP, dUMP, and dTMP), and very low activity against TDP, IMP, UDP, GMP, dGMP, AMP, dAMP, and 6-phosphogluconate. Appears to function as a house-cleaning nucleotidase in vivo, since the general nucleotidase activity of YjjG allows it to protect cells against non-canonical pyrimidine derivatives such as 5-fluoro-2'-deoxyuridine, 5-fluorouridine, 5-fluoroorotate, 5-fluorouracil, and 5-aza-2'-deoxycytidine, and prevents the incorporation of potentially mutagenic nucleotides into DNA. Its dUMP phosphatase activity that catalyzes the hydrolysis of dUMP to deoxyuridine is necessary for thymine utilization via the thymine salvage pathway. Is strictly specific to substrates with 5'-phosphates and shows no activity against nucleoside 2'- or 3'-monophosphates. The protein is Pyrimidine 5'-nucleotidase YjjG (yjjG) of Escherichia coli (strain K12).